The chain runs to 344 residues: MMSTDQHIQQNMNDNSNNSNNSNNNNTNNNNNNQSVNVNVNNTNNNTQTISNLSAGLKSVSLTDQQQNEVNLNLLQQQLHQEASTQQQQSRITQFFQNQPTEGFTLFSHRSAPNGFKVAIILSELNLPFNTFFLDFNNGEQRTPEFVTINPNARVPALIDHYNDNTSIWESGAITLYLVSKYLKENGECSLWSNNLIEQSQISSWLFFQTSGHAPMIGQALHFRYFHSCPVPSAVERYTDEVRRVYGVIEMALAERREALIMDLDVENAAAYSAGTTPLSQSRFFDHPVWLVGDRTTVADLSFVPWNNVVDRIGINLKVEFPEVYKWTKHMMQRPAVKRALRGD.

Positions 1–49 (MMSTDQHIQQNMNDNSNNSNNSNNNNTNNNNNNQSVNVNVNNTNNNTQT) are disordered. Positions 9-49 (QQNMNDNSNNSNNSNNNNTNNNNNNQSVNVNVNNTNNNTQT) are enriched in low complexity. Positions 102–186 (EGFTLFSHRS…YLVSKYLKEN (85 aa)) constitute a GST N-terminal domain. The GST C-terminal domain occupies 195-344 (NLIEQSQISS…PAVKRALRGD (150 aa)).

This sequence belongs to the GST superfamily. In terms of assembly, homodimer.

In terms of biological role, plays an important role in the cellular response to the nitrogen source. URE2 gene plays a major part in the repression of GLN1 and GDH2 genes by glutamine, and is required for the inactivation of glutamine synthetase. URE2 gene product may catalytically inactivate GLN3 in response to an increase in the intracellular concentration of glutamine. In Candida albicans (strain SC5314 / ATCC MYA-2876) (Yeast), this protein is Protein URE2 (URE2).